The chain runs to 159 residues: Ribosomal RNA large subunit methyltransferase H (159 aa).

L76 and G108 together coordinate S-adenosyl-L-methionine.

The protein belongs to the RNA methyltransferase RlmH family. Homodimer.

The protein localises to the cytoplasm. It catalyses the reaction pseudouridine(1915) in 23S rRNA + S-adenosyl-L-methionine = N(3)-methylpseudouridine(1915) in 23S rRNA + S-adenosyl-L-homocysteine + H(+). Functionally, specifically methylates the pseudouridine at position 1915 (m3Psi1915) in 23S rRNA. In Levilactobacillus brevis (strain ATCC 367 / BCRC 12310 / CIP 105137 / JCM 1170 / LMG 11437 / NCIMB 947 / NCTC 947) (Lactobacillus brevis), this protein is Ribosomal RNA large subunit methyltransferase H.